A 941-amino-acid chain; its full sequence is Glycine dehydrogenase (decarboxylating) (941 aa).

Lys-692 bears the N6-(pyridoxal phosphate)lysine mark.

It belongs to the GcvP family. In terms of assembly, the glycine cleavage system is composed of four proteins: P, T, L and H. The cofactor is pyridoxal 5'-phosphate.

The catalysed reaction is N(6)-[(R)-lipoyl]-L-lysyl-[glycine-cleavage complex H protein] + glycine + H(+) = N(6)-[(R)-S(8)-aminomethyldihydrolipoyl]-L-lysyl-[glycine-cleavage complex H protein] + CO2. Its function is as follows. The glycine cleavage system catalyzes the degradation of glycine. The P protein binds the alpha-amino group of glycine through its pyridoxal phosphate cofactor; CO(2) is released and the remaining methylamine moiety is then transferred to the lipoamide cofactor of the H protein. The sequence is that of Glycine dehydrogenase (decarboxylating) from Mycobacterium tuberculosis (strain ATCC 25177 / H37Ra).